A 430-amino-acid chain; its full sequence is Asparagine--tRNA ligase (430 aa).

This sequence belongs to the class-II aminoacyl-tRNA synthetase family. Homodimer.

It is found in the cytoplasm. It catalyses the reaction tRNA(Asn) + L-asparagine + ATP = L-asparaginyl-tRNA(Asn) + AMP + diphosphate + H(+). The sequence is that of Asparagine--tRNA ligase from Staphylococcus haemolyticus (strain JCSC1435).